The chain runs to 471 residues: Ribulose bisphosphate carboxylase large chain (471 aa).

Substrate contacts are provided by Asn-115 and Thr-165. Residue Lys-167 is the Proton acceptor of the active site. Lys-169 is a binding site for substrate. Residues Lys-193, Asp-195, and Glu-196 each contribute to the Mg(2+) site. Lys-193 carries the N6-carboxylysine modification. His-286 acts as the Proton acceptor in catalysis. Substrate is bound by residues Arg-287, His-319, and Ser-371.

It belongs to the RuBisCO large chain family. Type I subfamily. As to quaternary structure, heterohexadecamer of 8 large chains and 8 small chains. Mg(2+) is required as a cofactor.

It is found in the carboxysome. The enzyme catalyses 2 (2R)-3-phosphoglycerate + 2 H(+) = D-ribulose 1,5-bisphosphate + CO2 + H2O. It carries out the reaction D-ribulose 1,5-bisphosphate + O2 = 2-phosphoglycolate + (2R)-3-phosphoglycerate + 2 H(+). Its function is as follows. RuBisCO catalyzes two reactions: the carboxylation of D-ribulose 1,5-bisphosphate, the primary event in carbon dioxide fixation, as well as the oxidative fragmentation of the pentose substrate in the photorespiration process. Both reactions occur simultaneously and in competition at the same active site. The sequence is that of Ribulose bisphosphate carboxylase large chain from Synechococcus sp. (strain RCC307).